Reading from the N-terminus, the 862-residue chain is Semaphorin-4D (862 aa).

The signal sequence occupies residues 1 to 21 (MRMCTPIRGLLMALAVMFGTA). One can recognise a Sema domain in the interval 22-500 (MAFAPIPRIT…SNSGVVQAPL (479 aa)). Over 22–734 (MAFAPIPRIT…TMYLKSSDNR (713 aa)) the chain is Extracellular. N-linked (GlcNAc...) asparagine glycosylation is found at asparagine 49 and asparagine 77. 2 cysteine pairs are disulfide-bonded: cysteine 97/cysteine 108 and cysteine 126/cysteine 135. 2 N-linked (GlcNAc...) asparagine glycosylation sites follow: asparagine 139 and asparagine 191. 2 disulfide bridges follow: cysteine 257–cysteine 370 and cysteine 281–cysteine 326. N-linked (GlcNAc...) asparagine glycans are attached at residues asparagine 329, asparagine 379, and asparagine 419. A PSI domain is found at 502 to 551 (FCGKHGTCEDCVLARDPYCAWSPPTATCVALHQTESPSRGLIQEMSGDAS). 4 disulfides stabilise this stretch: cysteine 503–cysteine 520, cysteine 509–cysteine 553, cysteine 512–cysteine 529, and cysteine 576–cysteine 624. The Ig-like C2-type domain maps to 554 to 636 (PDKSKGSYRQ…EERVKNKTVF (83 aa)). Asparagine 613 and asparagine 632 each carry an N-linked (GlcNAc...) asparagine glycan. Residues 735–755 (LLMSLFLFFFVLFLCLFFYNC) form a helical membrane-spanning segment. Topologically, residues 756–862 (YKGYLPRQCL…KFADSDADGD (107 aa)) are cytoplasmic. The tract at residues 794–837 (VEPGSFSQQNGEHPKPALDTGYETEQDTITSKVPTDREDSQRID) is disordered. A compositionally biased stretch (basic and acidic residues) spans 827–837 (PTDREDSQRID). At serine 833 the chain carries Phosphoserine.

It belongs to the semaphorin family. As to quaternary structure, homodimer. Interacts with PLXNB2. Interacts with PLXNB1. In terms of tissue distribution, strongly expressed in skeletal muscle, peripheral blood lymphocytes, spleen, and thymus and also expressed at lower levels in testes, brain, kidney, small intestine, prostate, heart, placenta, lung and pancreas, but not in colon and liver.

Its subcellular location is the cell membrane. Cell surface receptor for PLXNB1 and PLXNB2 that plays an important role in cell-cell signaling. Regulates GABAergic synapse development. Promotes the development of inhibitory synapses in a PLXNB1-dependent manner. Modulates the complexity and arborization of developing neurites in hippocampal neurons by activating PLXNB1 and interaction with PLXNB1 mediates activation of RHOA. Promotes the migration of cerebellar granule cells. Plays a role in the immune system; induces B-cells to aggregate and improves their viability (in vitro). Induces endothelial cell migration through the activation of PTK2B/PYK2, SRC, and the phosphatidylinositol 3-kinase-AKT pathway. In Homo sapiens (Human), this protein is Semaphorin-4D (SEMA4D).